A 363-amino-acid polypeptide reads, in one-letter code: SWIRM domain-containing protein YOR338W (363 aa).

Disordered regions lie at residues 1-22 (MLDN…GGIN) and 186-208 (LYED…VPVR). Residues 186–196 (LYEDDGNRSEN) show a composition bias toward basic and acidic residues. The region spanning 266-363 (LKVEWKGSPM…LQDKHFEKYL (98 aa)) is the SWIRM domain.

In Saccharomyces cerevisiae (strain ATCC 204508 / S288c) (Baker's yeast), this protein is SWIRM domain-containing protein YOR338W.